A 198-amino-acid polypeptide reads, in one-letter code: Imidazoleglycerol-phosphate dehydratase (198 aa).

Belongs to the imidazoleglycerol-phosphate dehydratase family.

The protein resides in the cytoplasm. The catalysed reaction is D-erythro-1-(imidazol-4-yl)glycerol 3-phosphate = 3-(imidazol-4-yl)-2-oxopropyl phosphate + H2O. Its pathway is amino-acid biosynthesis; L-histidine biosynthesis; L-histidine from 5-phospho-alpha-D-ribose 1-diphosphate: step 6/9. The protein is Imidazoleglycerol-phosphate dehydratase of Herminiimonas arsenicoxydans.